Reading from the N-terminus, the 939-residue chain is Vacuolar membrane protease (939 aa).

Over Met1 to Lys11 the chain is Cytoplasmic. A helical transmembrane segment spans residues Thr12 to Asp32. At Lys33–Leu356 the chain is on the vacuolar side. Residues Asn59, Asn88, and Asn114 are each glycosylated (N-linked (GlcNAc...) asparagine). 2 residues coordinate Zn(2+): His149 and Asp161. Catalysis depends on Glu193, which acts as the Proton acceptor. The Zn(2+) site is built by Glu194, Glu219, and His293. Residue Asn326 is glycosylated (N-linked (GlcNAc...) asparagine). The chain crosses the membrane as a helical span at residues Phe357–Ile377. At Val378–Ser388 the chain is on the cytoplasmic side. Residues Gly389–Thr409 traverse the membrane as a helical segment. At Thr410–Asn424 the chain is on the vacuolar side. Residues Phe425–Thr445 traverse the membrane as a helical segment. Residues Met446 to Ser453 are Cytoplasmic-facing. Residues Phe454–Tyr474 form a helical membrane-spanning segment. The Vacuolar segment spans residues Gln475–Pro491. The helical transmembrane segment at Phe492–Phe512 threads the bilayer. Over Lys513–Lys588 the chain is Cytoplasmic. Positions Tyr540–Arg552 are enriched in basic and acidic residues. Positions Tyr540–Thr561 are disordered. A helical membrane pass occupies residues Leu589–Leu609. Over Leu610–Lys636 the chain is Vacuolar. N-linked (GlcNAc...) asparagine glycosylation is present at Asn622. The chain crosses the membrane as a helical span at residues Ile637 to Gly657. Residues Cys658–Thr663 lie on the Cytoplasmic side of the membrane. A helical transmembrane segment spans residues Leu664–Met684. Over Asn685–Leu939 the chain is Vacuolar. 2 N-linked (GlcNAc...) asparagine glycosylation sites follow: Asn810 and Asn820.

This sequence belongs to the peptidase M28 family. Zn(2+) serves as cofactor.

It localises to the vacuole membrane. In terms of biological role, may be involved in vacuolar sorting and osmoregulation. In Vanderwaltozyma polyspora (strain ATCC 22028 / DSM 70294 / BCRC 21397 / CBS 2163 / NBRC 10782 / NRRL Y-8283 / UCD 57-17) (Kluyveromyces polysporus), this protein is Vacuolar membrane protease.